The primary structure comprises 197 residues: Pyridoxal 5'-phosphate synthase subunit PdxT (197 aa).

Residue glycine 53 to serine 55 participates in L-glutamine binding. The active-site Nucleophile is the cysteine 85. Residues arginine 114 and isoleucine 142–arginine 143 contribute to the L-glutamine site. Active-site charge relay system residues include histidine 179 and glutamate 181.

Belongs to the glutaminase PdxT/SNO family. In terms of assembly, in the presence of PdxS, forms a dodecamer of heterodimers. Only shows activity in the heterodimer.

It catalyses the reaction aldehydo-D-ribose 5-phosphate + D-glyceraldehyde 3-phosphate + L-glutamine = pyridoxal 5'-phosphate + L-glutamate + phosphate + 3 H2O + H(+). The catalysed reaction is L-glutamine + H2O = L-glutamate + NH4(+). Its pathway is cofactor biosynthesis; pyridoxal 5'-phosphate biosynthesis. Its function is as follows. Catalyzes the hydrolysis of glutamine to glutamate and ammonia as part of the biosynthesis of pyridoxal 5'-phosphate. The resulting ammonia molecule is channeled to the active site of PdxS. The chain is Pyridoxal 5'-phosphate synthase subunit PdxT from Pyrococcus furiosus (strain ATCC 43587 / DSM 3638 / JCM 8422 / Vc1).